The chain runs to 780 residues: Putative ABC transporter ATP-binding protein BL0043 (780 aa).

2 ABC transporter domains span residues 2 to 238 and 282 to 531; these read LKDI…QSET and IRVS…GPAH. 34 to 41 provides a ligand contact to ATP; the sequence is GPNGSGKS. Residues 230-272 form a disordered region; it reads AEAVSQSETEGSIGTEAAPSRPTNDSPRQREREDGSELPLLSD. ATP is bound at residue 316–323; sequence GVNGSGKS. Transmembrane regions (helical) follow at residues 551–573, 586–608, 623–645, and 759–778; these read FTMFAVNTPTQLALGIAITLAVI, SIHPILILLVLMGVVNLFVVRTG, GVTIAVLYACRFALVIILGAVFL, and IAARDLIFAAAVIIYIAAII.

It belongs to the ABC transporter superfamily.

The protein resides in the cell membrane. Its function is as follows. Probably part of an ABC transporter complex. Responsible for energy coupling to the transport system. The sequence is that of Putative ABC transporter ATP-binding protein BL0043 from Bifidobacterium longum (strain NCC 2705).